The sequence spans 214 residues: Probable DNA (cytosine-5)-methyltransferase (214 aa).

Cysteine 62 is an active-site residue.

Belongs to the class I-like SAM-binding methyltransferase superfamily. C5-methyltransferase family. Probably requires another subunit for function.

The enzyme catalyses a 2'-deoxycytidine in DNA + S-adenosyl-L-methionine = a 5-methyl-2'-deoxycytidine in DNA + S-adenosyl-L-homocysteine + H(+). Functionally, this is probably the methylase that recognizes and modifies 5'-CpG-3'. The chain is Probable DNA (cytosine-5)-methyltransferase from Dryophytes versicolor (chameleon treefrog).